A 138-amino-acid polypeptide reads, in one-letter code: Acidic phospholipase A2 Cvv-E6a (138 aa).

Residues 1–16 (MRTLWIVAVLLLGVEG) form the signal peptide. 7 cysteine pairs are disulfide-bonded: cysteine 42–cysteine 131, cysteine 44–cysteine 60, cysteine 59–cysteine 111, cysteine 65–cysteine 138, cysteine 66–cysteine 104, cysteine 73–cysteine 97, and cysteine 91–cysteine 102. Tyrosine 43, glycine 45, and glycine 47 together coordinate Ca(2+). Histidine 63 is a catalytic residue. Aspartate 64 is a binding site for Ca(2+). The active site involves aspartate 105.

It belongs to the phospholipase A2 family. Group II subfamily. D49 sub-subfamily. Requires Ca(2+) as cofactor. Expressed by the venom gland.

It is found in the secreted. It carries out the reaction a 1,2-diacyl-sn-glycero-3-phosphocholine + H2O = a 1-acyl-sn-glycero-3-phosphocholine + a fatty acid + H(+). Its function is as follows. Snake venom phospholipase A2 (PLA2) that significantly inhibits ADP-induced platelet aggregation in platelet-rich plasma of human, rabbit and guinea pig. PLA2 catalyzes the calcium-dependent hydrolysis of the 2-acyl groups in 3-sn-phosphoglycerides. The polypeptide is Acidic phospholipase A2 Cvv-E6a (Crotalus viridis viridis (Prairie rattlesnake)).